The chain runs to 66 residues: Large ribosomal subunit protein bL32 (66 aa).

Belongs to the bacterial ribosomal protein bL32 family.

This chain is Large ribosomal subunit protein bL32, found in Rickettsia bellii (strain OSU 85-389).